Reading from the N-terminus, the 811-residue chain is Probable phosphoketolase (811 aa).

It belongs to the XFP family. Requires thiamine diphosphate as cofactor.

This Methylococcus capsulatus (strain ATCC 33009 / NCIMB 11132 / Bath) protein is Probable phosphoketolase.